The sequence spans 524 residues: Sterol O-acyltransferase 2 (524 aa).

The interval 1–31 (MEPKAPQLRRRERQGEEQENGACGEGNTRTH) is disordered. The Cytoplasmic segment spans residues 1–118 (MEPKAPQLRR…LDELMGVQHF (118 aa)). Histidine 117 provides a ligand contact to cholesterol. The helical transmembrane segment at 119 to 140 (RTIYHMFIAGLCVLIISTLAID) threads the bilayer. At 141–160 (FIDEGRLMLEFDLLLFSFGQ) the chain is on the lumenal side. The helical transmembrane segment at 161–186 (LPLALMMWVPMFLSTLLLPYQTLRLW) threads the bilayer. The Cytoplasmic segment spans residues 187–198 (ARPRSGGAWTLG). The helical transmembrane segment at 199–222 (ASLGCVLLAAHAAVLCVLPVHVSV) threads the bilayer. At 223–230 (KHELPPAS) the chain is on the lumenal side. Residues 231 to 254 (RCVLVFEQVRFLMKSYSFLRETVP) form a helical membrane-spanning segment. Residues 255–295 (GIFCVRGGKGICTPSFSSYLYFLFCPTLIYRETYPRTPSIR) are Cytoplasmic-facing. At cysteine 279 the chain carries Cysteine sulfenic acid (-SOH); alternate. Residue cysteine 279 forms a Glycyl cysteine thioester (Cys-Gly) (interchain with G-Cter in ubiquitin); alternate linkage. The helical transmembrane segment at 296 to 328 (WNYVAKNFAQALGCLLYACFILGRLCVPVFANM) threads the bilayer. At 329 to 345 (SREPFSTRALLLSILHA) the chain is on the lumenal side. Residues 346–371 (TGPGIFMLLLIFFAFLHCWLNAFAEM) form a helical membrane-spanning segment. Residues 372–419 (LRFGDRMFYRDWWNSTSFSNYYRTWNVVVHDWLYSYVYQDGLWLLGRQ) are Cytoplasmic-facing. The short motif at 379–385 (FYRDWWN) is the FYXDWWN motif element. The an acyl-CoA site is built by asparagine 391, arginine 394, asparagine 397, histidine 401, tyrosine 409, and serine 432. The helical transmembrane segment at 420 to 444 (GRGAAMLGVFLVSALVHEYIFCFVL) threads the bilayer. Residue histidine 436 is part of the active site. Residues 445–450 (GFFYPV) are Lumenal-facing. A helical transmembrane segment spans residues 451 to 466 (MLILFLVVGGLLNFTM). The Cytoplasmic segment spans residues 467–472 (NDRHTG). Residues 473–504 (PAWNILMWTFLFLGQGIQVSLYCQEWYARRHC) traverse the membrane as a helical segment. At 505-524 (PLPQPTFWELVTPRSWSCHP) the chain is on the lumenal side.

Belongs to the membrane-bound acyltransferase family. Sterol o-acyltransferase subfamily. May form homo- or heterodimers. Interacts with INSIG1; the interaction is direct and promotes association with AMFR/gp78. Post-translationally, polyubiquitinated by AMFR/gp78 at Cys-279, leading to its degradation when the lipid levels are low. Association with AMFR/gp78 is mediated via interaction with INSIG1. High concentration of cholesterol and fatty acid results in Cys-279 oxidation, preventing ubiquitination at the same site, resulting in protein stabilization. In terms of processing, oxidized at Cys-279: high concentration of cholesterol and fatty acid induce reactive oxygen species, which oxidizes Cys-279, preventing ubiquitination at the same site, and resulting in protein stabilization.

It is found in the endoplasmic reticulum membrane. It catalyses the reaction a sterol + a long-chain fatty acyl-CoA = a long-chain 3-hydroxysterol ester + CoA. It carries out the reaction cholesterol + an acyl-CoA = a cholesterol ester + CoA. The catalysed reaction is cholesterol + (9Z)-octadecenoyl-CoA = cholesteryl (9Z-octadecenoate) + CoA. The enzyme catalyses (5Z,8Z,11Z,14Z,17Z)-eicosapentaenoyl-CoA + cholesterol = (5Z,8Z,11Z,14Z,17Z-eicosapentaenoyl)-cholesterol + CoA. It catalyses the reaction (9Z,12Z,15Z)-octadecatrienoyl-CoA + cholesterol = (9Z,12Z,15Z-octadecatrienoyl)-cholesterol + CoA. It carries out the reaction (5Z,8Z,11Z,14Z)-eicosatetraenoyl-CoA + cholesterol = cholesteryl (5Z,8Z,11Z,14Z)-eicosatetraenoate + CoA. Catalyzes the formation of fatty acid-cholesterol esters, which are less soluble in membranes than cholesterol. Plays a role in lipoprotein assembly and dietary cholesterol absorption. Utilizes oleoyl-CoA ((9Z)-octadecenoyl-CoA) and linolenoyl-CoA ((9Z,12Z,15Z)-octadecatrienoyl-CoA) as substrates. May provide cholesteryl esters for lipoprotein secretion from hepatocytes and intestinal mucosa. This is Sterol O-acyltransferase 2 from Rattus norvegicus (Rat).